Consider the following 323-residue polypeptide: Acetyl esterase (323 aa).

Positions H91 to G93 match the Involved in the stabilization of the negatively charged intermediate by the formation of the oxyanion hole motif. Residues S165, D262, and H292 contribute to the active site.

This sequence belongs to the 'GDXG' lipolytic enzyme family. Homodimer. Interacts with MalT and MelA.

The protein localises to the cytoplasm. Its function is as follows. Displays esterase activity towards short chain fatty esters (acyl chain length of up to 8 carbons). Able to hydrolyze triacetylglycerol (triacetin) and tributyrylglycerol (tributyrin), but not trioleylglycerol (triolein) or cholesterol oleate. Negatively regulates MalT activity by antagonizing maltotriose binding. Inhibits MelA galactosidase activity. This is Acetyl esterase from Salmonella agona (strain SL483).